Consider the following 426-residue polypeptide: Serine--tRNA ligase (426 aa).

An L-serine-binding site is contributed by 230–232; sequence TAE. 261-263 is an ATP binding site; the sequence is RSE. Glutamate 284 serves as a coordination point for L-serine. Residue 348-351 coordinates ATP; that stretch reads EISS. An L-serine-binding site is contributed by serine 384.

It belongs to the class-II aminoacyl-tRNA synthetase family. Type-1 seryl-tRNA synthetase subfamily. In terms of assembly, homodimer. The tRNA molecule binds across the dimer.

It localises to the cytoplasm. The catalysed reaction is tRNA(Ser) + L-serine + ATP = L-seryl-tRNA(Ser) + AMP + diphosphate + H(+). It carries out the reaction tRNA(Sec) + L-serine + ATP = L-seryl-tRNA(Sec) + AMP + diphosphate + H(+). The protein operates within aminoacyl-tRNA biosynthesis; selenocysteinyl-tRNA(Sec) biosynthesis; L-seryl-tRNA(Sec) from L-serine and tRNA(Sec): step 1/1. In terms of biological role, catalyzes the attachment of serine to tRNA(Ser). Is also able to aminoacylate tRNA(Sec) with serine, to form the misacylated tRNA L-seryl-tRNA(Sec), which will be further converted into selenocysteinyl-tRNA(Sec). The protein is Serine--tRNA ligase of Novosphingobium aromaticivorans (strain ATCC 700278 / DSM 12444 / CCUG 56034 / CIP 105152 / NBRC 16084 / F199).